A 124-amino-acid chain; its full sequence is uncharacterized protein (124 aa).

In terms of assembly, interacts with dil1.

This is an uncharacterized protein from Schizosaccharomyces pombe (strain 972 / ATCC 24843) (Fission yeast).